Consider the following 325-residue polypeptide: GMP reductase (325 aa).

C174 functions as the Thioimidate intermediate in the catalytic mechanism. 203 to 226 (MIADGGIRTHGDIAKSIRFGASMV) serves as a coordination point for NADP(+).

It belongs to the IMPDH/GMPR family. GuaC type 2 subfamily.

It carries out the reaction IMP + NH4(+) + NADP(+) = GMP + NADPH + 2 H(+). Catalyzes the irreversible NADPH-dependent deamination of GMP to IMP. It functions in the conversion of nucleobase, nucleoside and nucleotide derivatives of G to A nucleotides, and in maintaining the intracellular balance of A and G nucleotides. This Staphylococcus carnosus (strain TM300) protein is GMP reductase.